We begin with the raw amino-acid sequence, 547 residues long: Large cysteine-rich periplasmic protein OmcB (547 aa).

Positions Met-1–Ala-22 are cleaved as a signal peptide. The propeptide occupies Ser-23–Ser-40. Residues Lys-45–Lys-84 are disordered. Over residues His-52–His-61 the composition is skewed to basic residues. Positions Ser-62 to Lys-79 are enriched in basic and acidic residues.

As to quaternary structure, part of a disulfide cross-linked outer membrane complex (COMC) composed of the major outer membrane porin (MOMP), the small cysteine-rich protein (OmcA) and the large cysteine-rich periplasmic protein (OmcB).

It localises to the periplasm. Its function is as follows. In elementary bodies (EBs, the infectious stage, which is able to survive outside the host cell) provides the structural integrity of the outer envelope through disulfide cross-links with the small cysteine-rich protein and the major outer membrane protein. It has been described in publications as the Sarkosyl-insoluble COMC (Chlamydia outer membrane complex), and serves as the functional equivalent of peptidoglycan. The sequence is that of Large cysteine-rich periplasmic protein OmcB (omcB) from Chlamydia trachomatis serovar D (strain ATCC VR-885 / DSM 19411 / UW-3/Cx).